A 272-amino-acid chain; its full sequence is Probable glutathione S-transferase DHAR2, chloroplastic (272 aa).

The transit peptide at 1–57 (MAVLLRTTTSATTATSGGSSSATALLATTFRRGGRRLLLLPATRGSAPRRAALLTAR) directs the protein to the chloroplast. Glutathione contacts are provided by lysine 68 and aspartate 79. Residues lysine 68 and aspartate 79 each contribute to the L-ascorbate site. The 79-residue stretch at 70 to 148 (SLTVPDRLGD…AIEEKYPEPS (79 aa)) folds into the GST N-terminal domain. Cysteine 80 (nucleophile) is an active-site residue. Glutathione is bound by residues lysine 107, valine 120, serine 133, histidine 219, and tryptophan 266. A GST C-terminal domain is found at 126–272 (EEQWVADSDV…IAGWRPKVMG (147 aa)). Lysine 269 lines the L-ascorbate pocket.

The protein belongs to the GST superfamily. DHAR family. In terms of assembly, monomer.

It localises to the plastid. Its subcellular location is the chloroplast. It catalyses the reaction RX + glutathione = an S-substituted glutathione + a halide anion + H(+). The catalysed reaction is L-dehydroascorbate + 2 glutathione = glutathione disulfide + L-ascorbate. In terms of biological role, involved in ascorbate homeostasis. Maintains redox pools of ascorbate by recycling dihydroascorbate (DHA) to ascorbate. Involved in scavenging reactive oxygen species (ROS) under oxidative stresses. The chain is Probable glutathione S-transferase DHAR2, chloroplastic from Oryza sativa subsp. japonica (Rice).